A 958-amino-acid chain; its full sequence is Dermatan-sulfate epimerase (958 aa).

The signal sequence occupies residues 1–22; that stretch reads MRTHTRGAPSVFFICLFCFVSA. Over 23–902 the chain is Lumenal; sequence CVTDENPEVM…APALSASYTR (880 aa). Asparagine 183 carries an N-linked (GlcNAc...) asparagine glycan. Histidine 205 functions as the Proton donor in the catalytic mechanism. Residue tyrosine 261 is part of the active site. 2 N-linked (GlcNAc...) asparagine glycosylation sites follow: asparagine 336 and asparagine 411. Residues histidine 452 and glutamate 470 each coordinate Mn(2+). Residue tyrosine 473 is part of the active site. A Mn(2+)-binding site is contributed by asparagine 481. N-linked (GlcNAc...) asparagine glycosylation is found at asparagine 642 and asparagine 648. The helical transmembrane segment at 903 to 923 threads the bilayer; sequence LFLILNIAIFFVMLAMQLTYF. The Cytoplasmic segment spans residues 924–933; it reads QRAQSLHGQR. Residues 934–954 form a helical membrane-spanning segment; sequence CLYAVLLIDSCILLWLYSSCS. Over 955–958 the chain is Lumenal; the sequence is QSQC.

It belongs to the dermatan-sulfate isomerase family. Requires Mn(2+) as cofactor. In terms of processing, N-glycosylated. Glycosylation is important for enzymatic activity.

The protein localises to the endoplasmic reticulum membrane. Its subcellular location is the golgi apparatus membrane. The protein resides in the cytoplasmic vesicle membrane. It is found in the microsome membrane. The enzyme catalyses chondroitin 4'-sulfate = dermatan 4'-sulfate. Its pathway is glycan metabolism; chondroitin sulfate biosynthesis. It participates in glycan metabolism; heparan sulfate biosynthesis. In terms of biological role, converts D-glucuronic acid to L-iduronic acid (IdoUA) residues. Plays an important role in the biosynthesis of the glycosaminoglycan/mucopolysaccharide dermatan sulfate. The polypeptide is Dermatan-sulfate epimerase (DSE) (Bos taurus (Bovine)).